Consider the following 726-residue polypeptide: Sister chromatid cohesion protein SCC4 (726 aa).

TPR repeat units lie at residues 7–40 (AEGL…QISF), 88–121 (FQNY…ASSV), 132–165 (CNFN…ASHI), 229–262 (RLRL…IQQL), 443–477 (PTIL…CIEA), 531–564 (ASIL…AHNH), and 572–605 (AQYL…AKKL). Residues 697–726 (SVGIEGPSPAPSSSRLVGLDTGKRWGKRRM) form a disordered region.

The protein belongs to the SCC4/mau-2 family. In terms of assembly, interacts with SCC2 to form the cohesin loading complex. As to expression, expressed ubiquitously.

The protein localises to the nucleus. It localises to the cytoplasm. In terms of biological role, essential protein required for cell fate determination during embryogenesis. Involved in sister chromatid cohesion. Forms a complex with SCC2, which is required for the association of the cohesin complex with chromosomes. In Arabidopsis thaliana (Mouse-ear cress), this protein is Sister chromatid cohesion protein SCC4.